Here is a 607-residue protein sequence, read N- to C-terminus: Elongation factor 4 (607 aa).

One can recognise a tr-type G domain in the interval 11–193 (SKIRNFSIIA…QIVEKVPAPT (183 aa)). Residues 23 to 28 (DHGKST) and 140 to 143 (NKID) contribute to the GTP site.

The protein belongs to the TRAFAC class translation factor GTPase superfamily. Classic translation factor GTPase family. LepA subfamily.

Its subcellular location is the cell membrane. It catalyses the reaction GTP + H2O = GDP + phosphate + H(+). Its function is as follows. Required for accurate and efficient protein synthesis under certain stress conditions. May act as a fidelity factor of the translation reaction, by catalyzing a one-codon backward translocation of tRNAs on improperly translocated ribosomes. Back-translocation proceeds from a post-translocation (POST) complex to a pre-translocation (PRE) complex, thus giving elongation factor G a second chance to translocate the tRNAs correctly. Binds to ribosomes in a GTP-dependent manner. This is Elongation factor 4 from Bacillus anthracis (strain A0248).